The primary structure comprises 809 residues: Poly(A) polymerase (809 aa).

The interval 1–50 (MNKNGGPPVANITTSSTTITSTTTTQAKSQLPSSLSVNNLHTTQGSTDQP) is disordered. Positions 12–25 (ITTSSTTITSTTTT) are enriched in low complexity. A compositionally biased stretch (polar residues) spans 26 to 50 (QAKSQLPSSLSVNNLHTTQGSTDQP). Residues 133–135 (FGS), 146–148 (DID), Asp-200, Lys-262, Tyr-271, and 280–281 (GV) each bind ATP. Mg(2+) is bound by residues Asp-146, Asp-148, and Asp-200. Disordered regions lie at residues 529 to 760 (FVKD…QQIQ) and 785 to 809 (ISSS…IRGN). Positions 530–540 (VKDEGPEEPVK) are enriched in basic and acidic residues. The span at 572 to 655 (SPITTNINST…TPPTTTTINS (84 aa)) shows a compositional bias: low complexity. Positions 656–665 (VQPPSAQPTE) are enriched in polar residues. Positions 666-706 (NGSSTSNSPTSTSINNTALPPNPTTNSESTIETTITLPTTL) are enriched in low complexity. The span at 707–735 (ESQTSTLKDSNEISTNGTAVATEPTITSP) shows a compositional bias: polar residues. Low complexity-rich tracts occupy residues 736–760 (SVNI…QQIQ) and 785–794 (ISSSSETSQS).

It belongs to the poly(A) polymerase family. Mg(2+) is required as a cofactor. Mn(2+) serves as cofactor.

The protein localises to the nucleus. It catalyses the reaction RNA(n) + ATP = RNA(n)-3'-adenine ribonucleotide + diphosphate. Polymerase that creates the 3'-poly(A) tail of mRNA's. May acquire specificity through interaction with a cleavage and polyadenylation factor. This Dictyostelium discoideum (Social amoeba) protein is Poly(A) polymerase (papA).